The sequence spans 286 residues: 2-hydroxy-6-oxononadienedioate/2-hydroxy-6-oxononatrienedioate hydrolase 2 (286 aa).

Histidine 266 acts as the Proton acceptor in catalysis.

It belongs to the AB hydrolase superfamily. MhpC family. As to quaternary structure, homodimer.

It carries out the reaction (2Z,4E)-2-hydroxy-6-oxonona-2,4-dienedioate + H2O = (2Z)-2-hydroxypenta-2,4-dienoate + succinate + H(+). The catalysed reaction is (2Z,4E,7E)-2-hydroxy-6-oxonona-2,4,7-trienedioate + H2O = (2Z)-2-hydroxypenta-2,4-dienoate + fumarate + H(+). It functions in the pathway aromatic compound metabolism; 3-phenylpropanoate degradation. In terms of biological role, catalyzes the cleavage of the C5-C6 bond of 2-hydroxy-6-oxononadienedioate and 2-hydroxy-6-oxononatrienedioate, a dienol ring fission product of the bacterial meta-cleavage pathway for degradation of phenylpropionic acid. The polypeptide is 2-hydroxy-6-oxononadienedioate/2-hydroxy-6-oxononatrienedioate hydrolase 2 (Pseudomonas putida (Arthrobacter siderocapsulatus)).